The chain runs to 469 residues: 3-isopropylmalate dehydratase large subunit (469 aa).

The [4Fe-4S] cluster site is built by cysteine 347, cysteine 408, and cysteine 411.

It belongs to the aconitase/IPM isomerase family. LeuC type 1 subfamily. As to quaternary structure, heterodimer of LeuC and LeuD. The cofactor is [4Fe-4S] cluster.

The catalysed reaction is (2R,3S)-3-isopropylmalate = (2S)-2-isopropylmalate. Its pathway is amino-acid biosynthesis; L-leucine biosynthesis; L-leucine from 3-methyl-2-oxobutanoate: step 2/4. Functionally, catalyzes the isomerization between 2-isopropylmalate and 3-isopropylmalate, via the formation of 2-isopropylmaleate. This is 3-isopropylmalate dehydratase large subunit from Actinobacillus pleuropneumoniae serotype 7 (strain AP76).